We begin with the raw amino-acid sequence, 204 residues long: Acyl-homoserine-lactone synthase (204 aa).

It belongs to the autoinducer synthase family.

The catalysed reaction is a fatty acyl-[ACP] + S-adenosyl-L-methionine = an N-acyl-L-homoserine lactone + S-methyl-5'-thioadenosine + holo-[ACP] + H(+). Required for the synthesis of acyl-HSL autoinducers that bind to SolR. This is Acyl-homoserine-lactone synthase (solI) from Ralstonia solanacearum (Pseudomonas solanacearum).